The sequence spans 448 residues: Protein odr-4 homolog (448 aa).

The next 2 helical transmembrane spans lie at 76 to 96 (ASQL…FLMT) and 428 to 448 (GLLI…YYII).

The protein belongs to the ODR-4 family.

It is found in the membrane. Functionally, may play a role in the trafficking of a subset of G-protein coupled receptors. The polypeptide is Protein odr-4 homolog (odr4) (Xenopus tropicalis (Western clawed frog)).